Consider the following 140-residue polypeptide: Large ribosomal subunit protein bL17 (140 aa).

Residues D119 to E133 are compositionally biased toward basic and acidic residues. Positions D119 to E140 are disordered.

Belongs to the bacterial ribosomal protein bL17 family. Part of the 50S ribosomal subunit. Contacts protein L32.

This Maricaulis maris (strain MCS10) (Caulobacter maris) protein is Large ribosomal subunit protein bL17.